We begin with the raw amino-acid sequence, 214 residues long: Adenylate kinase (214 aa).

An ATP-binding site is contributed by 10 to 15 (GAGKGT). Residues 30 to 59 (STGDMLRGAIKAGTDLGKQAKTLMDAGQLV) form an NMP region. AMP is bound by residues T31, R36, 57–59 (QLV), 85–88 (GFPR), and Q92. Residues 122-159 (GRRVHQASGRTYHVVYNPPKVEGKDDVTGEDLIIRADD) are LID. Residues R123 and 132-133 (TY) contribute to the ATP site. The AMP site is built by R156 and R167. K200 provides a ligand contact to ATP.

Belongs to the adenylate kinase family. Monomer.

The protein resides in the cytoplasm. The catalysed reaction is AMP + ATP = 2 ADP. Its pathway is purine metabolism; AMP biosynthesis via salvage pathway; AMP from ADP: step 1/1. Functionally, catalyzes the reversible transfer of the terminal phosphate group between ATP and AMP. Plays an important role in cellular energy homeostasis and in adenine nucleotide metabolism. The sequence is that of Adenylate kinase from Pasteurella multocida (strain Pm70).